A 45-amino-acid polypeptide reads, in one-letter code: Large ribosomal subunit protein bL34 (45 aa).

Residues 1–45 form a disordered region; the sequence is MTKRTLGGTSRKRKRVSGFRVRMRSHTGRRVIRTRRKRGRSRLAV. A compositionally biased stretch (basic residues) spans 10 to 45; the sequence is SRKRKRVSGFRVRMRSHTGRRVIRTRRKRGRSRLAV.

This sequence belongs to the bacterial ribosomal protein bL34 family.

The chain is Large ribosomal subunit protein bL34 from Parasynechococcus marenigrum (strain WH8102).